We begin with the raw amino-acid sequence, 286 residues long: Shikimate dehydrogenase (NADP(+)) (286 aa).

Shikimate contacts are provided by residues 25–27 and threonine 72; that span reads SLS. Lysine 76 (proton acceptor) is an active-site residue. Glutamate 88 provides a ligand contact to NADP(+). Residues asparagine 97 and aspartate 113 each coordinate shikimate. Residues 138–142, 162–167, and isoleucine 232 contribute to the NADP(+) site; these read GSGGA and NRTIER. A shikimate-binding site is contributed by tyrosine 234. Residue glycine 255 coordinates NADP(+).

Belongs to the shikimate dehydrogenase family. In terms of assembly, homodimer.

It catalyses the reaction shikimate + NADP(+) = 3-dehydroshikimate + NADPH + H(+). Its pathway is metabolic intermediate biosynthesis; chorismate biosynthesis; chorismate from D-erythrose 4-phosphate and phosphoenolpyruvate: step 4/7. In terms of biological role, involved in the biosynthesis of the chorismate, which leads to the biosynthesis of aromatic amino acids. Catalyzes the reversible NADPH linked reduction of 3-dehydroshikimate (DHSA) to yield shikimate (SA). The protein is Shikimate dehydrogenase (NADP(+)) of Magnetococcus marinus (strain ATCC BAA-1437 / JCM 17883 / MC-1).